Here is a 515-residue protein sequence, read N- to C-terminus: 2-isopropylmalate synthase (515 aa).

The 263-residue stretch at I4–K266 folds into the Pyruvate carboxyltransferase domain. Residues D13, H201, H203, and N237 each coordinate Mn(2+). Residues Q391–P515 form a regulatory domain region.

It belongs to the alpha-IPM synthase/homocitrate synthase family. LeuA type 1 subfamily. As to quaternary structure, homodimer. Mn(2+) serves as cofactor.

Its subcellular location is the cytoplasm. The enzyme catalyses 3-methyl-2-oxobutanoate + acetyl-CoA + H2O = (2S)-2-isopropylmalate + CoA + H(+). The protein operates within amino-acid biosynthesis; L-leucine biosynthesis; L-leucine from 3-methyl-2-oxobutanoate: step 1/4. Functionally, catalyzes the condensation of the acetyl group of acetyl-CoA with 3-methyl-2-oxobutanoate (2-ketoisovalerate) to form 3-carboxy-3-hydroxy-4-methylpentanoate (2-isopropylmalate). The chain is 2-isopropylmalate synthase from Geobacillus thermodenitrificans (strain NG80-2).